Reading from the N-terminus, the 483-residue chain is Probable cytosol aminopeptidase (483 aa).

2 residues coordinate Mn(2+): K245 and D250. The active site involves K257. The Mn(2+) site is built by D268, D327, and E329. R331 is an active-site residue.

Belongs to the peptidase M17 family. Mn(2+) is required as a cofactor.

Its subcellular location is the cytoplasm. It catalyses the reaction Release of an N-terminal amino acid, Xaa-|-Yaa-, in which Xaa is preferably Leu, but may be other amino acids including Pro although not Arg or Lys, and Yaa may be Pro. Amino acid amides and methyl esters are also readily hydrolyzed, but rates on arylamides are exceedingly low.. The enzyme catalyses Release of an N-terminal amino acid, preferentially leucine, but not glutamic or aspartic acids.. Its function is as follows. Presumably involved in the processing and regular turnover of intracellular proteins. Catalyzes the removal of unsubstituted N-terminal amino acids from various peptides. The sequence is that of Probable cytosol aminopeptidase from Wolinella succinogenes (strain ATCC 29543 / DSM 1740 / CCUG 13145 / JCM 31913 / LMG 7466 / NCTC 11488 / FDC 602W) (Vibrio succinogenes).